Here is a 257-residue protein sequence, read N- to C-terminus: Ribosomal RNA small subunit methyltransferase J (257 aa).

S-adenosyl-L-methionine is bound by residues 109–110 (RD), 125–126 (ER), and D179.

This sequence belongs to the methyltransferase superfamily. RsmJ family.

The protein resides in the cytoplasm. It carries out the reaction guanosine(1516) in 16S rRNA + S-adenosyl-L-methionine = N(2)-methylguanosine(1516) in 16S rRNA + S-adenosyl-L-homocysteine + H(+). Specifically methylates the guanosine in position 1516 of 16S rRNA. This is Ribosomal RNA small subunit methyltransferase J from Actinobacillus succinogenes (strain ATCC 55618 / DSM 22257 / CCUG 43843 / 130Z).